The sequence spans 225 residues: MNGIRDVVKEEQPRERLLLEGAGSLSNRELLAVLLRTGSKEESVLKLSDKILHHFDGLRMLKDATLEELVSIHGVGVAKASQLIAAFELGRRMVRLEYQNRYSIRNPEDCARYMMEEMRFLQQEHFVCLYLNTKNQVIHRQTIFIGSLNSSIVHPREVFKEAFRRAAASIICLHNHPSGDPAPSREDIEVTKRLVECGRIIGIEVLDHIIIGDHKFVSLKEKGHI.

Positions 103-225 (SIRNPEDCAR…FVSLKEKGHI (123 aa)) constitute an MPN domain. Zn(2+) contacts are provided by His174, His176, and Asp187. Positions 174-187 (HNHPSGDPAPSRED) match the JAMM motif motif.

It belongs to the UPF0758 family.

The protein is UPF0758 protein BCE33L4198 of Bacillus cereus (strain ZK / E33L).